A 203-amino-acid polypeptide reads, in one-letter code: Glycerol-3-phosphate acyltransferase (203 aa).

The next 5 helical transmembrane spans lie at I5–L25, L55–A75, I84–V104, I118–A138, and I159–L179.

It belongs to the PlsY family. In terms of assembly, probably interacts with PlsX.

Its subcellular location is the cell inner membrane. It catalyses the reaction an acyl phosphate + sn-glycerol 3-phosphate = a 1-acyl-sn-glycero-3-phosphate + phosphate. It participates in lipid metabolism; phospholipid metabolism. Catalyzes the transfer of an acyl group from acyl-phosphate (acyl-PO(4)) to glycerol-3-phosphate (G3P) to form lysophosphatidic acid (LPA). This enzyme utilizes acyl-phosphate as fatty acyl donor, but not acyl-CoA or acyl-ACP. The polypeptide is Glycerol-3-phosphate acyltransferase (Rhodopseudomonas palustris (strain ATCC BAA-98 / CGA009)).